The primary structure comprises 318 residues: UDP-3-O-acylglucosamine N-acyltransferase (318 aa).

His231 functions as the Proton acceptor in the catalytic mechanism.

The protein belongs to the transferase hexapeptide repeat family. LpxD subfamily. As to quaternary structure, homotrimer.

The catalysed reaction is a UDP-3-O-[(3R)-3-hydroxyacyl]-alpha-D-glucosamine + a (3R)-hydroxyacyl-[ACP] = a UDP-2-N,3-O-bis[(3R)-3-hydroxyacyl]-alpha-D-glucosamine + holo-[ACP] + H(+). It participates in bacterial outer membrane biogenesis; LPS lipid A biosynthesis. Its function is as follows. Catalyzes the N-acylation of UDP-3-O-acylglucosamine using 3-hydroxyacyl-ACP as the acyl donor. Is involved in the biosynthesis of lipid A, a phosphorylated glycolipid that anchors the lipopolysaccharide to the outer membrane of the cell. The polypeptide is UDP-3-O-acylglucosamine N-acyltransferase (Campylobacter jejuni subsp. doylei (strain ATCC BAA-1458 / RM4099 / 269.97)).